The primary structure comprises 775 residues: Ribonucleoside-diphosphate reductase large subunit (775 aa).

Substrate-binding positions include threonine 200, 215–216, glycine 246, 427–431, and 606–610; these read SC, NLCTE, and PTVSS. Cysteine 216 and cysteine 444 form a disulfide bridge. Asparagine 427 acts as the Proton acceptor in catalysis. Cysteine 429 acts as the Cysteine radical intermediate in catalysis. Glutamate 431 acts as the Proton acceptor in catalysis.

Belongs to the ribonucleoside diphosphate reductase large chain family. As to quaternary structure, heterotetramer composed of a homodimer of the large subunit (R1) and a homodimer of the small subunit (R2). Larger multisubunit protein complex are also active, composed of (R1)n(R2)n.

The enzyme catalyses a 2'-deoxyribonucleoside 5'-diphosphate + [thioredoxin]-disulfide + H2O = a ribonucleoside 5'-diphosphate + [thioredoxin]-dithiol. Ribonucleoside-diphosphate reductase holoenzyme provides the precursors necessary for viral DNA synthesis. Allows virus growth in non-dividing cells, as well as reactivation from latency in infected hosts. Catalyzes the biosynthesis of deoxyribonucleotides from the corresponding ribonucleotides. In Homo sapiens (Human), this protein is Ribonucleoside-diphosphate reductase large subunit.